The chain runs to 320 residues: Cell division protein FtsQ (320 aa).

The interval 1 to 24 (MAQTIKRGGKGVRRATAARSAQRK) is disordered. Topologically, residues 1-52 (MAQTIKRGGKGVRRATAARSAQRKVQTARQQTGSVLDSVLRWLPFSEETLHR) are cytoplasmic. The helical transmembrane segment at 53-73 (ILMTLILAAAAGLVWTVAVMA) threads the bilayer. Residues 74 to 320 (GIPALVSEQA…RAASAKSDEG (247 aa)) are Periplasmic-facing. Residues 92–160 (FKVSHLEVRG…DTLVIDIVER (69 aa)) enclose the POTRA domain. The segment at 296 to 320 (AAEKRAEEQARAEAKRAASAKSDEG) is disordered.

It belongs to the FtsQ/DivIB family. FtsQ subfamily.

It is found in the cell inner membrane. In terms of biological role, essential cell division protein. This Novosphingobium aromaticivorans (strain ATCC 700278 / DSM 12444 / CCUG 56034 / CIP 105152 / NBRC 16084 / F199) protein is Cell division protein FtsQ.